We begin with the raw amino-acid sequence, 106 residues long: Nucleoid-associated protein Rpal_0620 (106 aa).

The protein belongs to the YbaB/EbfC family. As to quaternary structure, homodimer.

It localises to the cytoplasm. It is found in the nucleoid. Its function is as follows. Binds to DNA and alters its conformation. May be involved in regulation of gene expression, nucleoid organization and DNA protection. In Rhodopseudomonas palustris (strain TIE-1), this protein is Nucleoid-associated protein Rpal_0620.